Here is an 85-residue protein sequence, read N- to C-terminus: Toxin Cll6 (85 aa).

An N-terminal signal peptide occupies residues 1-19; sequence MNSLLMIIGCLVLIGTVWT. An LCN-type CS-alpha/beta domain is found at 20-83; the sequence is KEGYLVNMKT…TWPLPGKSCS (64 aa). 4 disulfides stabilise this stretch: cysteine 31–cysteine 82, cysteine 35–cysteine 58, cysteine 44–cysteine 63, and cysteine 48–cysteine 65. A Serine amide modification is found at serine 83.

Belongs to the long (4 C-C) scorpion toxin superfamily. Sodium channel inhibitor family. Beta subfamily. Expressed by the venom gland.

It is found in the secreted. Beta toxins bind voltage-independently at site-4 of sodium channels (Nav) and shift the voltage of activation toward more negative potentials thereby affecting sodium channel activation and promoting spontaneous and repetitive firing. The protein is Toxin Cll6 of Centruroides limpidus (Mexican scorpion).